The chain runs to 404 residues: Clavilactone A biosynthesis cluster protein Y (404 aa).

In terms of biological role, part of the gene cluster that mediates the biosynthesis of clavilactone A, a meroterpenoid that features a unique benzo-fused ten-membered carbocyclic ring unit with an alpha,beta-epoxy-gamma-lactone moiety, forming an intriguing 10/5/3 tricyclic nested skeleton. ClaR, ClaS and ClaT are sufficient to produce clavilactone A and the function of claY, if any, has still to be identified. The biosynthesis begins with the prenyltransferase claS that transfers geranyl pyrophosphate (GPP) to hydroquinone to produces geranylhydroquinon. The cytochrome P450 monooxygenase claR then catalyzes the diradical coupling reaction between the intramolecular hydroquinone and allyl moieties to form the benzo-fused ten-membered carbocyclic ring unit of wigantol. Finally the cytochrome P450 monooxygenase claT exquisitely and stereoselectively assembles the alpha,beta-epoxy-gamma-lactone moiety, producing clavilactone A via arnebinol A. In Ampulloclitocybe clavipes (Club foot), this protein is Clavilactone A biosynthesis cluster protein Y.